Here is a 364-residue protein sequence, read N- to C-terminus: Chorismate synthase (364 aa).

Arg-48 provides a ligand contact to NADP(+). FMN contacts are provided by residues 131–133 (RSS), 243–244 (NA), Gly-288, 303–307 (KPTSS), and Arg-329.

The protein belongs to the chorismate synthase family. As to quaternary structure, homotetramer. The cofactor is FMNH2.

The enzyme catalyses 5-O-(1-carboxyvinyl)-3-phosphoshikimate = chorismate + phosphate. The protein operates within metabolic intermediate biosynthesis; chorismate biosynthesis; chorismate from D-erythrose 4-phosphate and phosphoenolpyruvate: step 7/7. Catalyzes the anti-1,4-elimination of the C-3 phosphate and the C-6 proR hydrogen from 5-enolpyruvylshikimate-3-phosphate (EPSP) to yield chorismate, which is the branch point compound that serves as the starting substrate for the three terminal pathways of aromatic amino acid biosynthesis. This reaction introduces a second double bond into the aromatic ring system. The protein is Chorismate synthase of Brucella melitensis biotype 2 (strain ATCC 23457).